The following is a 290-amino-acid chain: 7-methylguanosine phosphate-specific 5'-nucleotidase B (290 aa).

The active-site Nucleophile is the Asp39. Mg(2+)-binding residues include Asp39 and Asp41. Asp41 functions as the Proton donor in the catalytic mechanism. Position 86 (Glu86) interacts with CMP. Glu86 lines the N(7)-methyl-GMP pocket. Substrate contacts are provided by residues 154-155 and Lys203; that span reads SA. Mg(2+) is bound at residue Asp228.

This sequence belongs to the pyrimidine 5'-nucleotidase family. Monomer.

The protein localises to the cytoplasm. It carries out the reaction N(7)-methyl-GMP + H2O = N(7)-methylguanosine + phosphate. It catalyses the reaction CMP + H2O = cytidine + phosphate. The enzyme catalyses a ribonucleoside 5'-phosphate + H2O = a ribonucleoside + phosphate. Specifically hydrolyzes 7-methylguanosine monophosphate (m(7)GMP) to 7-methylguanosine and inorganic phosphate. The specific activity for m(7)GMP may protect cells against undesired salvage of m(7)GMP and its incorporation into nucleic acids. Also has weak activity for CMP. UMP and purine nucleotides are poor substrates. In Xenopus laevis (African clawed frog), this protein is 7-methylguanosine phosphate-specific 5'-nucleotidase B (Nt5c3b-b).